Here is a 141-residue protein sequence, read N- to C-terminus: Protein KRTCAP2 homolog (141 aa).

A run of 4 helical transmembrane segments spans residues 11-31, 42-62, 74-94, and 97-117; these read VVSS…LRFC, VLLG…CVSN, AKLL…AGLV, and VCAT…NRIS.

This sequence belongs to the KRTCAP2 family. As to quaternary structure, component of the oligosaccharyltransferase (OST) complex.

It is found in the membrane. Its function is as follows. Subunit of the oligosaccharyl transferase (OST) complex that catalyzes the initial transfer of a defined glycan (Glc(3)Man(9)GlcNAc(2) in eukaryotes) from the lipid carrier dolichol-pyrophosphate to an asparagine residue within an Asn-X-Ser/Thr consensus motif in nascent polypeptide chains, the first step in protein N-glycosylation. N-glycosylation occurs cotranslationally and the complex associates with the Sec61 complex at the channel-forming translocon complex that mediates protein translocation across the endoplasmic reticulum (ER). All subunits are required for a maximal enzyme activity. This is Protein KRTCAP2 homolog from Drosophila melanogaster (Fruit fly).